An 85-amino-acid polypeptide reads, in one-letter code: N.vectensis toxin 6 (85 aa).

A signal peptide spans 1–20; the sequence is MISFKTVIVCLFLWVVIIGA. 3 cysteine pairs are disulfide-bonded: C46/C82, C48/C71, and C64/C83.

Its function is as follows. Probable toxin. The sequence is that of N.vectensis toxin 6 from Nematostella vectensis (Starlet sea anemone).